The following is a 53-amino-acid chain: uncharacterized protein (53 aa).

Residues 34 to 53 are disordered; that stretch reads RKEKGKRHAAPLSLMGVHKR.

This is an uncharacterized protein from Treponema pallidum (strain Nichols).